Reading from the N-terminus, the 251-residue chain is tRNA-cytidine(32) 2-sulfurtransferase 2 (251 aa).

Residues 33 to 38 (SGGKDS) carry the PP-loop motif motif. Residues Cys-108, Cys-111, and Cys-199 each coordinate [4Fe-4S] cluster.

This sequence belongs to the TtcA family. In terms of assembly, homodimer. It depends on Mg(2+) as a cofactor. [4Fe-4S] cluster serves as cofactor.

It localises to the cytoplasm. It carries out the reaction cytidine(32) in tRNA + S-sulfanyl-L-cysteinyl-[cysteine desulfurase] + AH2 + ATP = 2-thiocytidine(32) in tRNA + L-cysteinyl-[cysteine desulfurase] + A + AMP + diphosphate + H(+). It functions in the pathway tRNA modification. Catalyzes the ATP-dependent 2-thiolation of cytidine in position 32 of tRNA, to form 2-thiocytidine (s(2)C32). The sulfur atoms are provided by the cysteine/cysteine desulfurase (IscS) system. The sequence is that of tRNA-cytidine(32) 2-sulfurtransferase 2 from Francisella tularensis subsp. tularensis (strain FSC 198).